The primary structure comprises 124 residues: U33-theraphotoxin-Cg1c (124 aa).

A signal peptide spans 1 to 17 (MKFAVAIAFTLLVCVFA). 5 disulfides stabilise this stretch: cysteine 26/cysteine 37, cysteine 31/cysteine 51, cysteine 36/cysteine 75, cysteine 61/cysteine 83, and cysteine 77/cysteine 94. Over residues 93–108 (RCQEESGKSDKSKESQ) the composition is skewed to basic and acidic residues. The disordered stretch occupies residues 93–124 (RCQEESGKSDKSKESQGSDESEESEESKESSG). Residues 109 to 118 (GSDESEESEE) are compositionally biased toward acidic residues.

Belongs to the neurotoxin 32 family. In terms of tissue distribution, expressed by the venom gland.

The protein localises to the secreted. This chain is U33-theraphotoxin-Cg1c, found in Chilobrachys guangxiensis (Chinese earth tiger tarantula).